We begin with the raw amino-acid sequence, 450 residues long: Bifunctional apoptosis regulator (450 aa).

The disordered stretch occupies residues 1 to 24; it reads MEEPQKNDLSMRGQEEDHPVRSSG. Residues 1–140 lie on the Cytoplasmic side of the membrane; that stretch reads MEEPQKNDLS…PSTGRVNQQR (140 aa). The RING-type zinc finger occupies 34–74; the sequence is CHCCYDTLVNPTTLNCGHSFCRHCLALWWMSSKKTECPECR. Residues 141–161 traverse the membrane as a helical segment; that stretch reads GGGFFSGVLTALTGVAVILLV. Residues 162-331 are Extracellular-facing; the sequence is YHWRSRESEH…REPTWKQWRE (170 aa). The SAM domain maps to 182–249; the sequence is WTTEEVVLWL…LMELERVRAL (68 aa). An N-linked (GlcNAc...) asparagine glycan is attached at asparagine 232. The chain crosses the membrane as a helical span at residues 332–352; the sequence is FLIKYSFLPYQLIAEFAWDWL. Over 353 to 360 the chain is Cytoplasmic; it reads EVHYWTSR. Residues 361 to 381 traverse the membrane as a helical segment; it reads FLIVNAMLLSVLELFSFWRIW. Over 382-404 the chain is Extracellular; that stretch reads SRSELKTVPQRMWSHFWKVSTQG. The chain crosses the membrane as a helical span at residues 405 to 425; sequence LFMAMFWPLIPQFVCNCLFYW. Residues 426–450 lie on the Cytoplasmic side of the membrane; the sequence is ALYFNPIINIDLVVKEIRRLETQVF.

As to quaternary structure, interacts with CASP8, BCL2 and BCL2L1 through SAM domain and also with HIP1, IFT57, ESRRBL1 and BCAP31. Interacts with NGFR; this interaction inhibits NF-kappa-B and JNK-related signaling pathways. In terms of processing, mediates RING-dependent self-ubiquitination leading to proteasomal degradation.

The protein localises to the endoplasmic reticulum membrane. The catalysed reaction is S-ubiquitinyl-[E2 ubiquitin-conjugating enzyme]-L-cysteine + [acceptor protein]-L-lysine = [E2 ubiquitin-conjugating enzyme]-L-cysteine + N(6)-ubiquitinyl-[acceptor protein]-L-lysine.. Its function is as follows. Membrane-bound E3 ubiquitin ligase that plays a role in several processes including apoptosis regulation or reticulum endoplasmic stress. Has anti-apoptotic activity, both for apoptosis triggered via death-receptors and via mitochondrial factors. Contributes to the dynamic control of IRE1/ERN1 signaling during ER stress by inducing BAX inhibitor 1/TMBIM6 proteasomal degradation. Promotes the activation of TGF-beta signaling by mediating the 'Lys-63'-linked ubiquitination of TGFBR1 which is critical to activate the pathway. Together with NGFR, negatively regulates NF-kappa-B and JNK-related signaling pathways. Promotes the proteasome-mediated degradation of PNPLA3, a protein involveld in lipid metabolism. The protein is Bifunctional apoptosis regulator (Bfar) of Rattus norvegicus (Rat).